The primary structure comprises 398 residues: MNELPRLPFDNPAILGIAPQMRALQKEGPIVRVRTAGEDAWLITRYDEVKALLSDRRLGLSDPKPERAAKSTARITMMALMAGDDYDREATEHPQMRELLVPRFSTRRMRVMKARIEQHVDELLDQLAASVAPVDLHRALSFPLPTMVVCDLLGVPLADRERIGQWARGTFDQSDSLHSVNTFQQVVDYMMELVQRKRTEPGDDILSELIAEKDGTLSDEYIAHLGCAVLLFGYETTIVRIDMGVLLMLRNPAQRALLAENPALAPAAVEEILRLAVGGKGSNALIPRYAHSDITVGETVIRTGDAVMLAIGAANIDGHAFPHADLFDLSREKPKAHMAFGHGTRHCIGRVLARIELTAVFERLFRRLPNLQLAVPEESLRWQEHRITGGFDEIPVTF.

C347 lines the heme pocket.

The protein belongs to the cytochrome P450 family. Requires heme as cofactor.

The catalysed reaction is pentalenolactone F + 2 reduced [2Fe-2S]-[ferredoxin] + O2 + 2 H(+) = pentalenolactone + 2 oxidized [2Fe-2S]-[ferredoxin] + 2 H2O. Its pathway is antibiotic biosynthesis; pentalenolactone biosynthesis. In terms of biological role, catalyzes the final step in the biosynthesis of the sesquiterpenoid antibiotic pentalenolactone by mediating the oxidative rearrangement of pentalenolactone F to pentalenolactone. The sequence is that of Pentalenolactone synthase (penM) from Streptomyces exfoliatus (Streptomyces hydrogenans).